The chain runs to 628 residues: Serine/threonine-protein kinase Nek11 (628 aa).

One can recognise a Protein kinase domain in the interval 30 to 288; that stretch reads YVLQQKLGSG…AADILKAPYM (259 aa). ATP contacts are provided by residues 36 to 44 and Lys62; that span reads LGSGSFGTV. Asp159 functions as the Proton acceptor in the catalytic mechanism. Ser274 is modified (phosphoserine; by CHEK1). The stretch at 347 to 385 forms a coiled coil; that stretch reads WLRKLQAADERARRLKKIAEENYKENDKRMQALRSRNVG. Residues 452–463 show a composition bias toward acidic residues; sequence SEDSEEQEEEMI. The disordered stretch occupies residues 452–475; that stretch reads SEDSEEQEEEMIFSEAGGDTKEEE.

Belongs to the protein kinase superfamily. NEK Ser/Thr protein kinase family. NIMA subfamily. In terms of assembly, interacts with NEK2. Mn(2+) serves as cofactor. It depends on Mg(2+) as a cofactor. Phosphorylated by NEK2. Phosphorylation at Ser-274 is important for its activation.

Its subcellular location is the nucleus. The protein resides in the nucleolus. It catalyses the reaction L-seryl-[protein] + ATP = O-phospho-L-seryl-[protein] + ADP + H(+). The catalysed reaction is L-threonyl-[protein] + ATP = O-phospho-L-threonyl-[protein] + ADP + H(+). Its activity is regulated as follows. Autorepressed by intramolecular binding of the C-terminus which dissociates following phosphorylation by NEK2. Activated in response to DNA damage. Inhibited by zinc. Functionally, protein kinase which plays an important role in the G2/M checkpoint response to DNA damage. Controls degradation of CDC25A by directly phosphorylating it on residues whose phosphorylation is required for BTRC-mediated polyubiquitination and degradation. The sequence is that of Serine/threonine-protein kinase Nek11 from Mus musculus (Mouse).